The chain runs to 140 residues: Large ribosomal subunit protein bL17 (140 aa).

This sequence belongs to the bacterial ribosomal protein bL17 family. In terms of assembly, part of the 50S ribosomal subunit. Contacts protein L32.

This chain is Large ribosomal subunit protein bL17, found in Rhizorhabdus wittichii (strain DSM 6014 / CCUG 31198 / JCM 15750 / NBRC 105917 / EY 4224 / RW1) (Sphingomonas wittichii).